The primary structure comprises 332 residues: Aquaporin Lacbi1:317173 (332 aa).

Positions 1–20 (MSGQHQITEQSSRNPLSRVS) are enriched in polar residues. Residues 1–45 (MSGQHQITEQSSRNPLSRVSTLLPEKPLSPTSTYAGTQKHPEAPR) are disordered. Topologically, residues 1–66 (MSGQHQITEQ…RNAIRKPMAE (66 aa)) are cytoplasmic. Residues 67-87 (FFGVALLIIFGAGSACQVVLS) traverse the membrane as a helical segment. Topologically, residues 88-100 (TNPDVASSARGSF) are extracellular. The helical transmembrane segment at 101–121 (LSINFGWAIGIAMGVWVSGGI) threads the bilayer. Topologically, residues 122-144 (SGGHINPAITIAMATYRGFPWRK) are cytoplasmic. Positions 127–129 (NPA) match the NPA 1 motif. Residues 145–165 (VPSYILAQVLGGVVGAGLVYA) traverse the membrane as a helical segment. The Extracellular portion of the chain corresponds to 166 to 199 (NYIHAIDIFEGGHHIRTQATASLFATYALPYMTQ). Residues 200–220 (ASCFFSEFLATAVLSMMVFAL) traverse the membrane as a helical segment. Residues 221–230 (TDKRNHSPTN) are Cytoplasmic-facing. A helical membrane pass occupies residues 231 to 251 (GLLPFALFILFVGLGASLGME). At 252–283 (TAYALNPARDFGPRLFLAMAGYGKALFNYRSQ) the chain is on the extracellular side. The NPA 2 signature appears at 257–259 (NPA). Residues 284 to 304 (YWLWAPIIAPVLGAQAGGLLY) traverse the membrane as a helical segment. The Cytoplasmic portion of the chain corresponds to 305-332 (DTFLNDGDNSPIKWRCASSQEHQLAEVV).

The protein belongs to the MIP/aquaporin (TC 1.A.8) family.

It localises to the membrane. It carries out the reaction H2O(in) = H2O(out). It catalyses the reaction NH4(+)(in) = NH4(+)(out). In terms of biological role, water channel required to facilitate the transport of water across membranes. Acts as the most efficient Laccaria water channel. In addition to water, also shows strong ammonium transport activity. May be involved in fungal nitrogen (ammonium) support of the plant host in symbiosis. The sequence is that of Aquaporin Lacbi1:317173 from Laccaria bicolor (strain S238N-H82 / ATCC MYA-4686) (Bicoloured deceiver).